Consider the following 452-residue polypeptide: Aspartyl/glutamyl-tRNA(Asn/Gln) amidotransferase subunit B (452 aa).

It belongs to the GatB/GatE family. GatB subfamily. As to quaternary structure, heterotrimer of A, B and C subunits.

The catalysed reaction is L-glutamyl-tRNA(Gln) + L-glutamine + ATP + H2O = L-glutaminyl-tRNA(Gln) + L-glutamate + ADP + phosphate + H(+). The enzyme catalyses L-aspartyl-tRNA(Asn) + L-glutamine + ATP + H2O = L-asparaginyl-tRNA(Asn) + L-glutamate + ADP + phosphate + 2 H(+). In terms of biological role, allows the formation of correctly charged Asn-tRNA(Asn) or Gln-tRNA(Gln) through the transamidation of misacylated Asp-tRNA(Asn) or Glu-tRNA(Gln) in organisms which lack either or both of asparaginyl-tRNA or glutaminyl-tRNA synthetases. The reaction takes place in the presence of glutamine and ATP through an activated phospho-Asp-tRNA(Asn) or phospho-Glu-tRNA(Gln). The polypeptide is Aspartyl/glutamyl-tRNA(Asn/Gln) amidotransferase subunit B (Methanosphaera stadtmanae (strain ATCC 43021 / DSM 3091 / JCM 11832 / MCB-3)).